The primary structure comprises 216 residues: Probable nicotinate-nucleotide adenylyltransferase (216 aa).

It belongs to the NadD family.

It carries out the reaction nicotinate beta-D-ribonucleotide + ATP + H(+) = deamido-NAD(+) + diphosphate. It participates in cofactor biosynthesis; NAD(+) biosynthesis; deamido-NAD(+) from nicotinate D-ribonucleotide: step 1/1. Its function is as follows. Catalyzes the reversible adenylation of nicotinate mononucleotide (NaMN) to nicotinic acid adenine dinucleotide (NaAD). The sequence is that of Probable nicotinate-nucleotide adenylyltransferase from Pelobacter propionicus (strain DSM 2379 / NBRC 103807 / OttBd1).